The following is an 860-amino-acid chain: Leucine--tRNA ligase (860 aa).

The 'HIGH' region motif lies at 42–52 (PYPSGRLHMGH). The short motif at 619–623 (KMSKS) is the 'KMSKS' region element. K622 provides a ligand contact to ATP.

This sequence belongs to the class-I aminoacyl-tRNA synthetase family.

The protein resides in the cytoplasm. It catalyses the reaction tRNA(Leu) + L-leucine + ATP = L-leucyl-tRNA(Leu) + AMP + diphosphate. The protein is Leucine--tRNA ligase of Escherichia coli O157:H7.